The chain runs to 311 residues: 3-oxo-4,17-pregnadiene-20-carboxyl-CoA hydratase alpha subunit (311 aa).

A DUF35 region spans residues 198–295; the sequence is WDGVKAHELR…VAIGMPVRAT (98 aa).

The protein belongs to the thioester dehydratase family. Heterodimer composed of ChsH1 and ChsH2. Two heterodimers combine to form a heterotetramer. The complex interacts with Ltp2 via the DUF35 C-terminal region of ChsH2. The ChsH1-ChsH2-Ltp2 protein complex is composed of two protomers that form a heterohexameric structure through the Ltp2 dimerization interface.

The enzyme catalyses 3-oxochola-4,17-dien-22-oyl-CoA + H2O = 17-hydroxy-3-oxochol-4-en-22-oyl-CoA. It carries out the reaction (2E)-octenoyl-CoA + H2O = 3-hydroxyoctanoyl-CoA. It catalyses the reaction (2E)-decenoyl-CoA + H2O = 3-hydroxydecanoyl-CoA. It functions in the pathway steroid metabolism; cholesterol degradation. With respect to regulation, in the absence of the Ltp2 aldolase, ChsH1/ChsH2 can hydrate only about 30% of the 3-OPDC-CoA substrate. Complete turnover requires the presence of Ltp2. In terms of biological role, involved in cholesterol side chain degradation. Catalyzes the hydration of 3-oxo-4,17-pregnadiene-20-carboxyl-CoA (3-OPDC-CoA) to form 17-hydroxy-3-oxo-4-pregnene-20-carboxyl-CoA (17-HOPC-CoA), in the modified beta-oxidation pathway for cholesterol side chain degradation. Can also use octenoyl-CoA and decenoyl-CoA, with lower efficiency. This chain is 3-oxo-4,17-pregnadiene-20-carboxyl-CoA hydratase alpha subunit, found in Mycobacterium tuberculosis (strain ATCC 25618 / H37Rv).